Reading from the N-terminus, the 451-residue chain is Magnesium transporter MgtE (451 aa).

The Cytoplasmic segment spans residues 1–285; the sequence is MVQNMTYDEL…TKAYVAAYRR (285 aa). Residues D64 and D96 each coordinate Mg(2+). 2 consecutive CBS domains span residues 140-203 and 204-260; these read MTNR…VQDL and MFTR…EADE. Mg(2+) contacts are provided by E218, D228, D249, D252, E257, E260, and D261. Residues 286–306 traverse the membrane as a helical segment; the sequence is LPWLILLLFIGLISGSIISYF. Over 307-311 the chain is Extracellular; the sequence is EDALK. The helical transmembrane segment at 312–332 threads the bilayer; it reads QVVALAFFMPMVSGMTGNTGT. Residues 333–371 lie on the Cytoplasmic side of the membrane; the sequence is QSLAVVIRGLSKEEMNKKTIVRLIFREFRTSIFIGAVCS. The next 2 helical transmembrane spans lie at 372–392 and 393–413; these read VLIAIVSIIWQGNALLGFVVA and SSLFLTLIIGTMSGTIIPIIL. Residues 414–427 lie on the Cytoplasmic side of the membrane; the sequence is HKLKVDPAIASGPL. Positions 419 and 433 each coordinate Mg(2+). The chain crosses the membrane as a helical span at residues 428–448; the sequence is ITTLNDILSLLIYFGIATAFI. The Extracellular segment spans residues 449 to 451; it reads HSL.

This sequence belongs to the SLC41A transporter family. Homodimer.

It is found in the cell membrane. The enzyme catalyses Mg(2+)(in) = Mg(2+)(out). Binds cyclic di-AMP (c-di-AMP), which may regulate the transporter activity. Functionally, acts as a magnesium transporter. MgtE is the dominant transporter under rich-medium growth conditions, and it may provide the primary route of magnesium import in B.subtilis, while the other putative transport proteins are likely to be utilized for more-specialized growth conditions. The protein is Magnesium transporter MgtE of Bacillus subtilis (strain 168).